The primary structure comprises 360 residues: MILNRLEVRGLRILRHVRMDPVSGLNLVHGVNGAGKTSLLEAIHLLSTGHSFRTRQLSPLLAPDCDAVEVVARIQSTGGGEPWPVGIRKTRDSTTARIRGENVRSLADLARLLPLQVMHPESHLLVSGGPGYRRAFLDWGCFHTDPAYHDHWRRYRHLLCQRNAALRDRSPARLLSAWDTALGEAGSALDLARATHLQTLLPYLDSLKQELPETSGLALEYRRGWNPEESLSESLAHSVQRDRSAGFTQVGPHRAELLCRLDGRPVAQVASRGQQKSVVLMLKMAQSLWLMETLGFPPVVLVDDLPAELDARHRGWLMNCLQGLGSQVFVTAIESDQVPLSGWDSWQMFHVEHGTLRVGD.

Position 30 to 37 (30 to 37 (GVNGAGKT)) interacts with ATP.

It belongs to the RecF family.

The protein localises to the cytoplasm. In terms of biological role, the RecF protein is involved in DNA metabolism; it is required for DNA replication and normal SOS inducibility. RecF binds preferentially to single-stranded, linear DNA. It also seems to bind ATP. The polypeptide is DNA replication and repair protein RecF (Thioalkalivibrio sulfidiphilus (strain HL-EbGR7)).